The primary structure comprises 403 residues: Heparan-sulfate 6-O-sulfotransferase 2 (403 aa).

Topologically, residues 1-7 are cytoplasmic; sequence MEDRSHK. The chain crosses the membrane as a helical; Signal-anchor for type II membrane protein span at residues 8-28; sequence VLLALVMLFLFAVIVLQYVCP. Residues 29-403 are Lumenal-facing; that stretch reads GTECQLLRLR…DYLGNVERWR (375 aa). Asn-64 carries N-linked (GlcNAc...) asparagine glycosylation. 88–96 is a 3'-phosphoadenylyl sulfate binding site; it reads HIQKTGGTT. Substrate-binding positions include 118–119, Arg-135, Trp-140, and His-145; that span reads KK. His-145 serves as the catalytic Proton acceptor. 3'-phosphoadenylyl sulfate is bound by residues Arg-180 and Ser-188. Residues His-192 and Trp-199 each contribute to the substrate site. A glycan (N-linked (GlcNAc...) asparagine) is linked at Asn-259. 312 to 314 is a 3'-phosphoadenylyl sulfate binding site; the sequence is TQY. N-linked (GlcNAc...) asparagine glycosylation is present at Asn-315. 318-319 contributes to the 3'-phosphoadenylyl sulfate binding site; the sequence is RA. Residues 381 to 403 form a disordered region; sequence AHLREQGENSSSTDYLGNVERWR. Asn-389 carries N-linked (GlcNAc...) asparagine glycosylation.

Belongs to the sulfotransferase 6 family.

The protein resides in the membrane. The catalysed reaction is alpha-D-glucosaminyl-[heparan sulfate](n) + 3'-phosphoadenylyl sulfate = 6-sulfo-alpha-D-glucosaminyl-[heparan sulfate](n) + adenosine 3',5'-bisphosphate + H(+). 6-O-sulfation enzyme which catalyzes the transfer of sulfate from 3'-phosphoadenosine 5'-phosphosulfate (PAPS) to position 6 of the N-sulfoglucosamine residue (GlcNS) of heparan sulfate. May also play a role in limb development. The polypeptide is Heparan-sulfate 6-O-sulfotransferase 2 (HS6ST2) (Gallus gallus (Chicken)).